The sequence spans 388 residues: Protochlorophyllide reductase A, chloroplastic (388 aa).

The transit peptide at 1 to 74 directs the protein to the chloroplast; the sequence is MALQLLPSTL…KPSGKKTLRQ (74 aa).

Belongs to the short-chain dehydrogenases/reductases (SDR) family. POR subfamily.

Its subcellular location is the plastid. It localises to the chloroplast. It carries out the reaction chlorophyllide a + NADP(+) = protochlorophyllide a + NADPH + H(+). Its pathway is porphyrin-containing compound metabolism; chlorophyll biosynthesis. Its function is as follows. Phototransformation of protochlorophyllide (Pchlide) to chlorophyllide (Chlide). The polypeptide is Protochlorophyllide reductase A, chloroplastic (PORA) (Triticum aestivum (Wheat)).